Here is a 373-residue protein sequence, read N- to C-terminus: UDP-3-O-acylglucosamine N-acyltransferase 2 (373 aa).

Catalysis depends on His-257, which acts as the Proton acceptor. Residues 346–373 (DGRTAASAEAAAPSSDATGVDQPDQAAS) form a disordered region. The span at 350–362 (AASAEAAAPSSDA) shows a compositional bias: low complexity.

The protein belongs to the transferase hexapeptide repeat family. LpxD subfamily. Homotrimer.

It catalyses the reaction a UDP-3-O-[(3R)-3-hydroxyacyl]-alpha-D-glucosamine + a (3R)-hydroxyacyl-[ACP] = a UDP-2-N,3-O-bis[(3R)-3-hydroxyacyl]-alpha-D-glucosamine + holo-[ACP] + H(+). Its pathway is bacterial outer membrane biogenesis; LPS lipid A biosynthesis. Its function is as follows. Catalyzes the N-acylation of UDP-3-O-acylglucosamine using 3-hydroxyacyl-ACP as the acyl donor. Is involved in the biosynthesis of lipid A, a phosphorylated glycolipid that anchors the lipopolysaccharide to the outer membrane of the cell. This Rhodopseudomonas palustris (strain BisB18) protein is UDP-3-O-acylglucosamine N-acyltransferase 2.